We begin with the raw amino-acid sequence, 192 residues long: Cytochrome b-245 light chain (192 aa).

At 2–7 (GQIEWA) the chain is on the cytoplasmic side. Residues 8–30 (MWANEQALASGLILITGGIVATA) traverse the membrane as a helical segment. Residues 31-35 (GRFTQ) are Extracellular-facing. A helical transmembrane segment spans residues 36–53 (WYFGAYSIAAGVLICLLE). At 54 to 69 (YPRGKRKKGSTMERCG) the chain is on the cytoplasmic side. An intramembrane segment occupies 70 to 80 (QKYLTSVVKLF). Residues 81 to 86 (GPLTRN) lie on the Cytoplasmic side of the membrane. Residues 87 to 104 (YYVRAALHFLLSVPAGFL) traverse the membrane as a helical segment. Residue Leu-105 is a topological domain, extracellular. A helical membrane pass occupies residues 106–126 (ATILGTVCLAIASVIYLLAAI). Residues 127–192 (RGEQWTPIEP…NPMPVTDEVV (66 aa)) lie on the Cytoplasmic side of the membrane. Residues 134 to 192 (IEPKPKERPQVGGTIKQPPTNPPPRPPAEVRKKPSEGEEEAASAGGPQVNPMPVTDEVV) form a disordered region. Thr-147 is subject to Phosphothreonine. Lys-149 is covalently cross-linked (Glycyl lysine isopeptide (Lys-Gly) (interchain with G-Cter in ubiquitin)). A phosphoserine mark is found at Ser-168 and Ser-176.

The protein belongs to the p22phox family. As to quaternary structure, component of the phagocyte NADPH oxidase core complex/cytochrome b558 complex, composed of CYBB (heavy chain (beta)) and CYBA (light chain (alpha)). Component of the phagocyte NADPH oxidase complex composed of an obligatory core heterodimer formed by the membrane proteins CYBA and CYBB and the cytosolic regulatory subunits NCF1/p47-phox, NCF2/p67-phox, NCF4/p40-phox and the small GTPase RAC1 or RAC2. Interacts with NCF1 (via SH3 domain). Interacts with SH3PXD2A. Interacts with DUOX1, DUOX2 and TPO. Interacts with NOX4; this interaction mediates superoxide generation. Interacts with calprotectin (S100A8/9). Interacts with GBP7. Interacts with NOXO1. Forms a heterodimer with NOX3 and is essential for activity and cell membrane localization of NOX3. Interacts with NOX1. In terms of processing, ubiquitinated at Lys-149 likely by RNF145. Phosphorylation at Thr-147 enhances NADPH oxidase activity by promoting NCF1/p47-phox binding. The strongest level of expression is found in kidney, peritoneal neutrophils and peritoneal macrophages, and a lower level in spleen and small intestine. Very low level of expression can be noted in brain, liver, testis, and heart.

The protein resides in the cell membrane. Subunit of NADPH oxidase complexes that is required for the NADPH oxidase activity that generates, in various cell types, superoxide from molecular oxygen utilizing NADPH as an electron donor. Subunit of the phagocyte NADPH oxidase complex that mediates the transfer of electrons from cytosolic NADPH to O2 to produce the superoxide anion (O2(-)). In the activated complex, electrons are first transferred from NADPH to flavin adenine dinucleotide (FAD) and subsequently transferred via two heme molecules to molecular oxygen, producing superoxide through an outer-sphere reaction. Activation of the NADPH oxidase complex is initiated by the assembly of cytosolic subunits of the NADPH oxidase complex with the core NADPH oxidase complex to form a complex at the plasma membrane or phagosomal membrane. This activation process is initiated by phosphorylation dependent binding of the cytosolic NCF1/p47-phox subunit to the C-terminus of CYBA/p22-phox. Aassociates with NOX3 to form a functional NADPH oxidase constitutively generating superoxide. This is Cytochrome b-245 light chain from Mus musculus (Mouse).